Reading from the N-terminus, the 106-residue chain is Thioredoxin (106 aa).

The Thioredoxin domain maps to 2–106 (VNFLKTKADF…GLREKIKKNK (105 aa)). Catalysis depends on nucleophile residues Cys-32 and Cys-35. Cys-32 and Cys-35 are joined by a disulfide.

The protein belongs to the thioredoxin family.

The protein resides in the cytoplasm. Its function is as follows. Participates in various redox reactions through the reversible oxidation of its active center dithiol to a disulfide and catalyzes dithiol-disulfide exchange reactions. The chain is Thioredoxin (THIO) from Geodia cydonium (Sponge).